The following is a 458-amino-acid chain: uncharacterized protein (458 aa).

12 helical membrane-spanning segments follow: residues 26–46 (LIAIGGAIGTGLFLGSGKSIH), 47–67 (FAGPSILFAYMITGIICFLIM), 95–115 (AAFITGWTYWFCWISIAMADL), 125–145 (WLPGVPQWVPGLIALIILLIM), 160–180 (FALIKVIAILALIVIGLVMIF), 208–228 (GFILSFQMVVFAFVGIELVGL), 251–271 (VLLFYIGALLVIMSIYPWDII), 278–298 (FVQVFVAVGIVGAASIINFVV), 342–362 (ALFFSAIVILIGVTLNYIMPE), 365–385 (FTLITSISTVCFIYIWGITVI), 409–429 (PFTNYLILAFLAFVLVVLALA), and 432–452 (TRVSLFVTPVWFILLIVIYKV).

Belongs to the amino acid-polyamine-organocation (APC) superfamily.

It localises to the cell membrane. In terms of biological role, probable amino-acid or metabolite transport protein. This is an uncharacterized protein from Bacillus subtilis (strain 168).